The chain runs to 360 residues: Peptide chain release factor 1 (360 aa).

N5-methylglutamine is present on glutamine 235.

This sequence belongs to the prokaryotic/mitochondrial release factor family. Methylated by PrmC. Methylation increases the termination efficiency of RF1.

The protein localises to the cytoplasm. Functionally, peptide chain release factor 1 directs the termination of translation in response to the peptide chain termination codons UAG and UAA. The chain is Peptide chain release factor 1 from Burkholderia cenocepacia (strain HI2424).